A 310-amino-acid polypeptide reads, in one-letter code: UPF0324 membrane protein VP0936 (310 aa).

10 helical membrane passes run 7–29 (PFGL…LVIG), 44–63 (IASF…GFGI), 75–94 (GIGL…SLIA), 104–126 (AYLI…APAI), 133–155 (IGLA…PVIG), 165–187 (FGTW…SAYG), 199–218 (LARA…IFSR), 228–250 (LVIP…FPQL), 257–279 (IFTI…ISIS), and 289–308 (LLFG…SWLV).

It belongs to the UPF0324 family.

It is found in the cell membrane. The protein is UPF0324 membrane protein VP0936 of Vibrio parahaemolyticus serotype O3:K6 (strain RIMD 2210633).